Reading from the N-terminus, the 364-residue chain is Histidinol-phosphate aminotransferase 2 (364 aa).

Residue lysine 223 is modified to N6-(pyridoxal phosphate)lysine.

The protein belongs to the class-II pyridoxal-phosphate-dependent aminotransferase family. Histidinol-phosphate aminotransferase subfamily. As to quaternary structure, homodimer. Pyridoxal 5'-phosphate serves as cofactor.

It catalyses the reaction L-histidinol phosphate + 2-oxoglutarate = 3-(imidazol-4-yl)-2-oxopropyl phosphate + L-glutamate. It functions in the pathway amino-acid biosynthesis; L-histidine biosynthesis; L-histidine from 5-phospho-alpha-D-ribose 1-diphosphate: step 7/9. The polypeptide is Histidinol-phosphate aminotransferase 2 (hisC2) (Oceanobacillus iheyensis (strain DSM 14371 / CIP 107618 / JCM 11309 / KCTC 3954 / HTE831)).